Reading from the N-terminus, the 220-residue chain is Redox-sensing transcriptional repressor Rex (220 aa).

Positions 25–64 (WYLSNVKLLKQKGERYVSSTQISKEINIDASQIAKDLSYV) form a DNA-binding region, H-T-H motif. 99–104 (GVGSLG) lines the NAD(+) pocket.

Belongs to the transcriptional regulatory Rex family. In terms of assembly, homodimer.

The protein localises to the cytoplasm. Modulates transcription in response to changes in cellular NADH/NAD(+) redox state. This is Redox-sensing transcriptional repressor Rex from Bacteroides fragilis (strain ATCC 25285 / DSM 2151 / CCUG 4856 / JCM 11019 / LMG 10263 / NCTC 9343 / Onslow / VPI 2553 / EN-2).